Reading from the N-terminus, the 688-residue chain is Small ribosomal subunit protein mS39 (688 aa).

Residues 1–37 (MASVASARWLRVSCGLCVPLTARRAGPCGRTPSSRFY) constitute a mitochondrion transit peptide. Lys126 is subject to N6-acetyllysine. 10 PPR repeats span residues 149 to 183 (IEEISEAALQERIKLKKVKASVDIFDQLLQAGTTV), 184 to 219 (SLETTNSLLDLLCYYGNQEPSTNYNFQQHEQTEELE), 258 to 292 (NAHSYCTMIRGMVKHRAHTQALSMYTELLNNRLRA), 293 to 333 (DVHT…NVKP), 334 to 370 (NLQTFNTILKCLRRFYAFGKLPALQTFREMKAIGIEP), 371 to 412 (SLAT…SPKD), 415 to 449 (DDMFFQSAMRVCSSLRDLELAYQVHGLLNTGDNRK), 457 to 491 (RNFYYSKFFSLLCLMEQIDVTLKWYKDLIPSVFFP), 492 to 526 (HSQTLIDLLQALDVANRLEMIPQIWKDSKEYGHTF), and 575 to 609 (PANSLNYIAILFLRAGRTQEAWKMLGLFRKHNKIP). The tract at residues 667–688 (GDLTALTSDSESDSDSDTSKDK) is disordered.

The protein belongs to the mitochondrion-specific ribosomal protein mS39 family. In terms of assembly, component of the mitochondrial ribosome small subunit (28S) which comprises a 12S rRNA and about 30 distinct proteins. Associated with the 12S mitochondrial rRNA (12S mt-rRNA).

It localises to the mitochondrion. Functionally, mitochondrial RNA-binding protein that has a role in mitochondrial translation. In Bos taurus (Bovine), this protein is Small ribosomal subunit protein mS39 (PTCD3).